The following is a 244-amino-acid chain: Ribosomal RNA small subunit methyltransferase G (244 aa).

S-adenosyl-L-methionine-binding positions include glycine 84, phenylalanine 89, 107 to 109 (DST), 135 to 136 (AE), and arginine 154.

This sequence belongs to the methyltransferase superfamily. RNA methyltransferase RsmG family.

The protein resides in the cytoplasm. Its function is as follows. Specifically methylates the N7 position of a guanine in 16S rRNA. This Nostoc punctiforme (strain ATCC 29133 / PCC 73102) protein is Ribosomal RNA small subunit methyltransferase G.